Reading from the N-terminus, the 427-residue chain is Serine protease HTRA2, mitochondrial (427 aa).

Residues 33-57 (HTASSSKGSGGDNSKDQENNGQNKS) form a disordered region. A helical membrane pass occupies residues 67–87 (VFQFCVPFSLGALVSAVLIEG). The short motif at 78–81 (ALVS) is the IAP-binding element. The tract at residues 144 to 307 (SNGSGFVIEQ…IPIDYVKVFL (164 aa)) is serine protease. Catalysis depends on charge relay system residues His-162, Asp-194, and Ser-271. Residues 330–415 (MGITMLTLTP…DLEIVILRGV (86 aa)) form the PDZ domain.

Belongs to the peptidase S1C family. As to quaternary structure, interacts with th/DIAP1 (via BIR 2 domain).

It is found in the mitochondrion intermembrane space. The protein localises to the mitochondrion membrane. It catalyses the reaction Cleavage of non-polar aliphatic amino-acids at the P1 position, with a preference for Val, Ile and Met. At the P2 and P3 positions, Arg is selected most strongly with a secondary preference for other hydrophilic residues.. Functionally, serine protease that shows proteolytic activity against a non-specific substrate beta-casein. Promotes or induces cell death either by direct binding to and inhibition of BIRC proteins (also called inhibitor of apoptosis proteins, IAPs), leading to an increase in caspase activity, or by a BIRC inhibition-independent, caspase-independent and serine protease activity-dependent mechanism. Can antagonize antiapoptotic activity of th/Diap1 by directly inducing the degradation of th/Diap1. The polypeptide is Serine protease HTRA2, mitochondrial (Drosophila persimilis (Fruit fly)).